The sequence spans 396 residues: Beta-1,3-N-acetylglucosaminyltransferase radical fringe (396 aa).

The Cytoplasmic segment spans residues 1 to 6 (MNFSCL). The chain crosses the membrane as a helical; Signal-anchor for type II membrane protein span at residues 7 to 27 (GLSKICFLVSVIFCTFLLLFI). Over 28–396 (PKTKTPWRPR…THWCPPRKTR (369 aa)) the chain is Lumenal. N-linked (GlcNAc...) asparagine glycans are attached at residues asparagine 49 and asparagine 120. A substrate-binding site is contributed by arginine 145. N-linked (GlcNAc...) asparagine glycosylation is present at asparagine 184. 2 disulfide bridges follow: cysteine 185–cysteine 196 and cysteine 214–cysteine 277. Residue aspartate 218 participates in substrate binding. Aspartate 219 is a Mn(2+) binding site. Aspartate 307 is a catalytic residue. Histidine 331 is a Mn(2+) binding site. Cysteine 381 and cysteine 390 are joined by a disulfide.

Belongs to the glycosyltransferase 31 family. Mn(2+) serves as cofactor. As to expression, detected in the mesanchymal region of the developing limb. Expressed in mesoderm but not in ectoderm with no evident boundary of expression.

It is found in the golgi apparatus membrane. The enzyme catalyses 3-O-(alpha-L-fucosyl)-L-threonyl-[EGF-like domain protein] + UDP-N-acetyl-alpha-D-glucosamine = 3-O-(N-acetyl-beta-D-glucosaminyl-(1-&gt;3)-alpha-L-fucosyl)-L-threonyl-[EGF-like domain protein] + UDP + H(+). It catalyses the reaction 3-O-(alpha-L-fucosyl)-L-seryl-[EGF-like domain protein] + UDP-N-acetyl-alpha-D-glucosamine = 3-O-(N-acetyl-beta-D-glucosaminyl-(1-&gt;3)-alpha-L-fucosyl)-L-seryl-[EGF-like domain protein] + UDP + H(+). Its function is as follows. Glycosyltransferase that initiates the elongation of O-linked fucose residues attached to EGF-like repeats in the extracellular domain of Notch molecules. Involved in forelimb development and in adult forelimb regeneration. In Notophthalmus viridescens (Eastern newt), this protein is Beta-1,3-N-acetylglucosaminyltransferase radical fringe (RFNG).